The following is a 588-amino-acid chain: Adenine deaminase (588 aa).

Belongs to the metallo-dependent hydrolases superfamily. Adenine deaminase family. As to quaternary structure, homodimer. Requires Mn(2+) as cofactor.

The enzyme catalyses adenine + H2O + H(+) = hypoxanthine + NH4(+). This Shigella flexneri protein is Adenine deaminase.